Reading from the N-terminus, the 492-residue chain is GDP-Man:Man(3)GlcNAc(2)-PP-Dol alpha-1,2-mannosyltransferase (492 aa).

The Lumenal portion of the chain corresponds to 1-19 (MAADTGSWCVYAVLRFFYS). Residues 20–40 (LFFPGLMICGVLCVYLVIGLW) traverse the membrane as a helical segment. The Cytoplasmic segment spans residues 41-233 (VIRWHLQRKK…SRNALLSKAK (193 aa)). An intramembrane region (helical) is located at residues 234-254 (LIYYYLFAFVYGLVGSCSDIV). Topologically, residues 255–399 (MVNSSWTLNH…IGLHTMWNEH (145 aa)) are cytoplasmic. Residues 400-420 (FGIGVVECMAAGTVILAHNSG) constitute an intramembrane region (helical). Topologically, residues 421–492 (GPKLDIVIPH…FLCSMEKLLT (72 aa)) are cytoplasmic.

The protein belongs to the glycosyltransferase group 1 family. Glycosyltransferase 4 subfamily.

It is found in the endoplasmic reticulum membrane. It catalyses the reaction an alpha-D-Man-(1-&gt;3)-[alpha-D-Man-(1-&gt;6)]-beta-D-Man-(1-&gt;4)-beta-D-GlcNAc-(1-&gt;4)-alpha-D-GlcNAc-diphospho-di-trans,poly-cis-dolichol + 2 GDP-alpha-D-mannose = an alpha-D-Man-(1-&gt;2)-alpha-D-Man-(1-&gt;2)-alpha-D-Man-(1-&gt;3)-[alpha-D-Man-(1-&gt;6)]-beta-D-Man-(1-&gt;4)-beta-D-GlcNAc-(1-&gt;4)-alpha-D-GlcNAc-diphospho-di-trans,poly-cis-dolichol + 2 GDP + 2 H(+). Its pathway is protein modification; protein glycosylation. GDP-Man:Man(3)GlcNAc(2)-PP-Dol alpha-1,2-mannosyltransferase that operates in the biosynthetic pathway of dolichol-linked oligosaccharides, the glycan precursors employed in protein asparagine (N)-glycosylation. The assembly of dolichol-linked oligosaccharides begins on the cytosolic side of the endoplasmic reticulum membrane and finishes in its lumen. The sequential addition of sugars to dolichol pyrophosphate produces dolichol-linked oligosaccharides containing fourteen sugars, including two GlcNAcs, nine mannoses and three glucoses. Once assembled, the oligosaccharide is transferred from the lipid to nascent proteins by oligosaccharyltransferases. Catalyzes, on the cytoplasmic face of the endoplasmic reticulum, the addition of the fourth and fifth mannose residues to the dolichol-linked oligosaccharide chain, to produce Man(5)GlcNAc(2)-PP-dolichol core oligosaccharide. Man(5)GlcNAc(2)-PP-dolichol is a substrate for ALG3, the following enzyme in the biosynthetic pathway. This chain is GDP-Man:Man(3)GlcNAc(2)-PP-Dol alpha-1,2-mannosyltransferase, found in Mus musculus (Mouse).